Here is a 181-residue protein sequence, read N- to C-terminus: UPF0397 protein SSU98_0390 (181 aa).

5 helical membrane-spanning segments follow: residues 9–29 (VVAT…INIP), 46–66 (LLAV…GHTL), 70–90 (LTYG…LVVG), 108–128 (ILFF…VIAP), and 147–167 (LVAG…LLVV).

This sequence belongs to the UPF0397 family.

The protein localises to the cell membrane. This is UPF0397 protein SSU98_0390 from Streptococcus suis (strain 98HAH33).